The sequence spans 302 residues: Transmembrane protein 191 (302 aa).

Positions 5–147 (QEQLLQLQKD…HLELAEAKFS (143 aa)) form a coiled coil. Residues 39–66 (LTGRLEELRERERSLQRRRSQASRAIRG) form a disordered region. The segment covering 42–53 (RLEELRERERSL) has biased composition (basic and acidic residues). A helical membrane pass occupies residues 242-262 (LQTLLLLPLGFLVLPLIYVVL).

Belongs to the TMEM191 family.

It localises to the membrane. This Mus musculus (Mouse) protein is Transmembrane protein 191.